The primary structure comprises 275 residues: Large ribosomal subunit protein uL2 (275 aa).

Positions 224–275 (AMNPVDHPHGGGEGKAPIGHPGPLTPWGKPALGYKTRKKGKASDKFIVKRRK) are disordered. Basic and acidic residues predominate over residues 264–275 (KASDKFIVKRRK).

This sequence belongs to the universal ribosomal protein uL2 family. In terms of assembly, part of the 50S ribosomal subunit. Forms a bridge to the 30S subunit in the 70S ribosome.

Functionally, one of the primary rRNA binding proteins. Required for association of the 30S and 50S subunits to form the 70S ribosome, for tRNA binding and peptide bond formation. It has been suggested to have peptidyltransferase activity; this is somewhat controversial. Makes several contacts with the 16S rRNA in the 70S ribosome. The protein is Large ribosomal subunit protein uL2 of Caldanaerobacter subterraneus subsp. tengcongensis (strain DSM 15242 / JCM 11007 / NBRC 100824 / MB4) (Thermoanaerobacter tengcongensis).